Consider the following 128-residue polypeptide: MSRKESRMQAFQTLFQLEMKDTELTINEAINFIKDDEPELDFDFIHWLVTGVKDHEPVLDDTIKPHLKDWSLQRLLKTDRIILRMATFELLHSDTPPKVIINEAVELAKQFSDDEHYKFINGVLSNIK.

It belongs to the NusB family.

In terms of biological role, involved in transcription antitermination. Required for transcription of ribosomal RNA (rRNA) genes. Binds specifically to the boxA antiterminator sequence of the ribosomal RNA (rrn) operons. The chain is Transcription antitermination protein NusB from Staphylococcus haemolyticus (strain JCSC1435).